Here is a 182-residue protein sequence, read N- to C-terminus: Methyl-CpG-binding domain-containing protein 5 (182 aa).

2 disordered regions span residues 1 to 56 (MSNG…GTVD) and 80 to 126 (HGTP…KPLN). In terms of domain architecture, MBD spans 25–101 (KRATPGDDNW…ENGDSHSEHS (77 aa)). A compositionally biased stretch (basic and acidic residues) spans 92-105 (ENGDSHSEHSEGRG). The span at 106-115 (SARRQTKSNK) shows a compositional bias: basic residues.

Homodimer and heterodimer with MBD6. Interacts with DDM1 via its MBD domain. As to expression, mostly expressed in flowers, and, to a lower extent, in seedlings, buds, stems and mature seeds, but barely in roots, exclusively in root meristem cells at tips (at protein level).

The protein resides in the nucleus. Its subcellular location is the chromosome. In terms of biological role, transcriptional regulator that binds CpG islands in promoters where the DNA is methylated at position 5 of cytosine within CpG dinucleotides. In addition, binds specifically methylated m(5)CpNpN but not m(5)CpNpG (N is A, T or C). Plays probably a role in gene silencing. This chain is Methyl-CpG-binding domain-containing protein 5 (MBD5), found in Arabidopsis thaliana (Mouse-ear cress).